Consider the following 252-residue polypeptide: tRNA (guanine-N(7)-)-methyltransferase (252 aa).

S-adenosyl-L-methionine-binding residues include glutamate 51, aspartate 76, asparagine 103, and aspartate 125. Residue aspartate 125 is part of the active site. Residues lysine 129, aspartate 159, and 199–202 (TYYE) contribute to the substrate site.

This sequence belongs to the class I-like SAM-binding methyltransferase superfamily. TrmB family.

The enzyme catalyses guanosine(46) in tRNA + S-adenosyl-L-methionine = N(7)-methylguanosine(46) in tRNA + S-adenosyl-L-homocysteine. It participates in tRNA modification; N(7)-methylguanine-tRNA biosynthesis. In terms of biological role, catalyzes the formation of N(7)-methylguanine at position 46 (m7G46) in tRNA. In Bacteroides fragilis (strain YCH46), this protein is tRNA (guanine-N(7)-)-methyltransferase.